The following is a 189-amino-acid chain: Calcyphosin (189 aa).

EF-hand domains are found at residues 21-56 (SGIQGVARFFRRLDQDGSRSLDVRELQRGLAELGLV), 57-92 (LDTAEMEGVCRRWDRDGSGTLDLEEFLRALRPPMSQ), 93-128 (AREAVVTAAFAKLDRSGDGVVTVDDLRGVYSGRTHP), and 136-172 (TEEQVLRHFLDNFDSSEKDGQVTLAEFQDYYSGVSAS). The Ca(2+) site is built by D34, D36, S38, S40, E45, D70, D72, S74, T76, E81, D106, S108, D110, and D117. Phosphoserine; by PKA is present on S40.

Monomer. Does not form oligomers in the presence of calcium.

Its subcellular location is the cytoplasm. In terms of biological role, calcium-binding protein. May play a role in cellular signaling events (Potential). The polypeptide is Calcyphosin (CAPS) (Bos taurus (Bovine)).